A 984-amino-acid chain; its full sequence is Protein translocase subunit SecA (984 aa).

Residues Gln-96, 114–118, and Asp-595 contribute to the ATP site; that span reads GEGKT. Basic and acidic residues-rich tracts occupy residues 930 to 942 and 952 to 971; these read EHEEEKKHQRLLE and KSDKKPRPKTLKERLKEERL. The tract at residues 930-984 is disordered; it reads EHEEEKKHQRLLEEAELQGVQGKSDKKPRPKTLKERLKEERLRKRKLKAKKKEQE. The span at 972 to 984 shows a compositional bias: basic residues; that stretch reads RKRKLKAKKKEQE.

It belongs to the SecA family. In terms of assembly, monomer and homodimer. Part of the essential Sec protein translocation apparatus which comprises SecA, SecYEG and auxiliary proteins SecDF. Other proteins may also be involved.

It is found in the cell inner membrane. Its subcellular location is the cytoplasm. The enzyme catalyses ATP + H2O + cellular proteinSide 1 = ADP + phosphate + cellular proteinSide 2.. In terms of biological role, part of the Sec protein translocase complex. Interacts with the SecYEG preprotein conducting channel. Has a central role in coupling the hydrolysis of ATP to the transfer of proteins into and across the cell membrane, serving as an ATP-driven molecular motor driving the stepwise translocation of polypeptide chains across the membrane. This chain is Protein translocase subunit SecA, found in Aquifex aeolicus (strain VF5).